The sequence spans 65 residues: Large ribosomal subunit protein bL35 (65 aa).

Residues 1–22 (MPKIKTVRGAAKRFKKTGSGGF) are disordered. Residues 10–22 (AAKRFKKTGSGGF) show a composition bias toward basic residues.

Belongs to the bacterial ribosomal protein bL35 family.

This is Large ribosomal subunit protein bL35 from Serratia proteamaculans (strain 568).